Consider the following 726-residue polypeptide: Capsid scaffolding protein (726 aa).

Residues H53, S140, and H159 each act as charge relay system in the active site. A disordered region spans residues Q321–T362. The span at A352–P361 shows a compositional bias: pro residues. Residues T365–Q384 are interaction with pAP. Disordered stretches follow at residues A385–S427, R472–A492, R568–S644, and G668–E726. Polar residues predominate over residues H402–P418. Positions K702–A720 are enriched in basic and acidic residues. The segment at S706 to E726 is interaction with major capsid protein.

This sequence belongs to the herpesviridae capsid scaffolding protein family. In terms of assembly, homomultimer. Interacts with major capsid protein. Exists in a monomer-dimer equilibrium with the dimer being the active species. Capsid scaffolding protein is cleaved by assemblin after formation of the spherical procapsid. As a result, the capsid obtains its mature, icosahedral shape. Cleavages occur at two or more sites: release (R-site) and maturation (M-site).

It is found in the host cytoplasm. The protein resides in the host nucleus. It carries out the reaction Cleaves -Ala-|-Ser- and -Ala-|-Ala- bonds in the scaffold protein.. Its function is as follows. Acts as a scaffold protein by binding major capsid protein in the cytoplasm, inducing the nuclear localization of both proteins. Multimerizes in the nucleus such as major capsid protein forms the icosahedral T=16 capsid. Autocatalytic cleavage releases the assembly protein, and subsequently abolishes interaction with major capsid protein. Cleavages products are evicted from the capsid before or during DNA packaging. Functionally, protease that plays an essential role in virion assembly within the nucleus. Catalyzes the cleavage of the assembly protein after formation of the spherical procapsid. By that cleavage, the capsid matures and gains its icosahedral shape. The cleavage sites seem to include -Ala-Ser-, -Ala-Ala-, as well as Ala-Thr bonds. Assemblin and cleavages products are evicted from the capsid before or during DNA packaging. Plays a major role in capsid assembly. Acts as a scaffold protein by binding major capsid protein. Multimerizes in the nucleus such as major capsid protein forms the icosahedral T=16 capsid. Cleaved by assemblin after capsid completion. The cleavages products are evicted from the capsid before or during DNA packaging. The sequence is that of Capsid scaffolding protein (UL26) from Psittacid herpesvirus 1 (isolate Amazon parrot/-/97-0001/1997) (PsHV-1).